We begin with the raw amino-acid sequence, 172 residues long: 3-hydroxydecanoyl-[acyl-carrier-protein] dehydratase (172 aa).

His-71 is an active-site residue.

The protein belongs to the thioester dehydratase family. FabA subfamily. As to quaternary structure, homodimer.

The protein localises to the cytoplasm. It carries out the reaction a (3R)-hydroxyacyl-[ACP] = a (2E)-enoyl-[ACP] + H2O. The catalysed reaction is (3R)-hydroxydecanoyl-[ACP] = (2E)-decenoyl-[ACP] + H2O. It catalyses the reaction (2E)-decenoyl-[ACP] = (3Z)-decenoyl-[ACP]. Its pathway is lipid metabolism; fatty acid biosynthesis. Functionally, necessary for the introduction of cis unsaturation into fatty acids. Catalyzes the dehydration of (3R)-3-hydroxydecanoyl-ACP to E-(2)-decenoyl-ACP and then its isomerization to Z-(3)-decenoyl-ACP. Can catalyze the dehydratase reaction for beta-hydroxyacyl-ACPs with saturated chain lengths up to 16:0, being most active on intermediate chain length. The protein is 3-hydroxydecanoyl-[acyl-carrier-protein] dehydratase of Escherichia coli (strain 55989 / EAEC).